The primary structure comprises 207 residues: Nitrophorin-1 (207 aa).

An N-terminal signal peptide occupies residues 1–23; that stretch reads MKSYTALLAVAILCLFAAVGVSG. Disulfide bonds link cysteine 25/cysteine 145 and cysteine 64/cysteine 194. Histidine 82 contacts heme.

It belongs to the calycin superfamily. Nitrophorin family. As to expression, salivary gland (at protein level).

The protein resides in the secreted. Heme-based protein that deliver nitric oxide gas (NO) to the victim while feeding, resulting in vasodilation and inhibition of platelet aggregation. Reversibly binds nitric oxide (NO). Also binds tightly to histamine, which is released by the host to induce wound healing. The chain is Nitrophorin-1 from Rhodnius prolixus (Triatomid bug).